Here is a 256-residue protein sequence, read N- to C-terminus: Adenosine 5'-phosphosulfate reductase (256 aa).

[4Fe-4S] cluster contacts are provided by cysteine 120, cysteine 121, cysteine 203, and cysteine 206. Residue cysteine 231 is the Nucleophile; cysteine thiosulfonate intermediate of the active site.

This sequence belongs to the PAPS reductase family. CysH subfamily. [4Fe-4S] cluster is required as a cofactor.

The protein localises to the cytoplasm. The catalysed reaction is [thioredoxin]-disulfide + sulfite + AMP + 2 H(+) = adenosine 5'-phosphosulfate + [thioredoxin]-dithiol. Its pathway is sulfur metabolism; hydrogen sulfide biosynthesis; sulfite from sulfate. In terms of biological role, catalyzes the formation of sulfite from adenosine 5'-phosphosulfate (APS) using thioredoxin as an electron donor. The sequence is that of Adenosine 5'-phosphosulfate reductase from Allochromatium vinosum (strain ATCC 17899 / DSM 180 / NBRC 103801 / NCIMB 10441 / D) (Chromatium vinosum).